The chain runs to 384 residues: Kinesin-like protein KIF25 (384 aa).

Positions 1-20 (MTWTSGQLQREKQARPGSGA) are disordered. The 357-residue stretch at 7–363 (QLQREKQARP…LGFGIRARQV (357 aa)) folds into the Kinesin motor domain. 65 to 72 (GQTGSGKS) contacts ATP. 2 disordered regions span residues 217–256 (DQACSATLPREQTEAGRAGRSRRASQGALAPQLVPGNPAG) and 362–384 (QVQRGPARKKPPSSQTEGKRRPD).

Belongs to the TRAFAC class myosin-kinesin ATPase superfamily. Kinesin family. In terms of assembly, homotetramer.

The protein localises to the cytoplasm. The protein resides in the cytoskeleton. It is found in the microtubule organizing center. Its subcellular location is the centrosome. Minus-end microtubule-dependent motor protein. Acts as a negative regulator of centrosome separation required to prevent premature centrosome separation during interphase. Required to maintain a centered nucleus to ensure that the spindle is stably oriented at the onset of mitosis. May also act as a negative regulator of amino acid starvation-induced autophagy. This Homo sapiens (Human) protein is Kinesin-like protein KIF25.